A 194-amino-acid polypeptide reads, in one-letter code: Large ribosomal subunit protein uL6x (194 aa).

At T75 the chain carries Phosphothreonine.

It belongs to the universal ribosomal protein uL6 family.

The chain is Large ribosomal subunit protein uL6x (RPL9D) from Arabidopsis thaliana (Mouse-ear cress).